The chain runs to 263 residues: Microtubule-associated protein RP/EB family member 1 (263 aa).

Residues 14-116 (NLSRHDMLAW…FVQWFKKFFD (103 aa)) enclose the Calponin-homology (CH) domain. Positions 150–182 (KPLGTGSAGPQRPIVAQRTPATPKGGTGMVKKA) are disordered. Residues 180 to 250 (KKAAGDDESA…LYATDEGFVI (71 aa)) enclose the EB1 C-terminal domain.

This sequence belongs to the MAPRE family.

It localises to the cytoplasm. The protein resides in the cytoskeleton. The protein localises to the microtubule organizing center. It is found in the centrosome. Its subcellular location is the golgi apparatus. It localises to the spindle. The protein resides in the spindle pole. In terms of biological role, plus-end tracking protein (+TIP) that binds to the plus-end of microtubules and regulates the dynamics of the microtubule cytoskeleton. Promotes cytoplasmic microtubule nucleation and elongation. Involved in mitotic spindle positioning by stabilizing microtubules and promoting dynamic connection between astral microtubules and the cortex during mitotic chromosome segregation. This Coturnix japonica (Japanese quail) protein is Microtubule-associated protein RP/EB family member 1 (MAPRE1).